The primary structure comprises 397 residues: MIIKPKVRGFICTTTHPVGCEANVRRQIAYTQEQGMIANGPKRVLVIGASTGYGLASRIATAFGSGAATIGVFFEKAGSETKTATAGWYNSAAFDKAAKEAGLYAKSVNGDAFSNECRAKVIELIKADLGQIDLVVYSLASPVRKMPETGEVVRSALKPIGETYTTTAIDTNKDQIITATVEPANEEEIQNTITVMGGQDWELWMAALRDAGVLADGAKSVAYSYIGTDLTWPIYWHGTLGRAKEDLDRAATAIRGDLAAKGGTAHVAVLKSVVTQASSAIPVMPLYISMAFKIMKEKGIHEGCMEQVYRMMRTRLYGEELALDEQARIRMDDWELREDVQQTCRDLWPSITTENLSELTDYTGYKQEFLRLFGFGLAEVDYEADVNPDVKFDVVEL.

NAD(+) contacts are provided by residues 48–53 (GASTGY), 74–75 (FE), 111–112 (DA), and 139–140 (LA). Residue Y225 participates in substrate binding. Y235 (proton donor) is an active-site residue. NAD(+)-binding positions include K244 and 273–275 (VVT).

This sequence belongs to the TER reductase family. In terms of assembly, monomer.

It carries out the reaction a 2,3-saturated acyl-[ACP] + NAD(+) = a (2E)-enoyl-[ACP] + NADH + H(+). It functions in the pathway lipid metabolism; fatty acid biosynthesis. Its activity is regulated as follows. Resistant to triclosan. In terms of biological role, involved in the final reduction of the elongation cycle of fatty acid synthesis (FAS II). Catalyzes the NADH-dependent reduction of the carbon-carbon double bond in the enoyl moiety that is covalently linked to an acyl carrier protein (ACP). The sequence is that of Enoyl-[acyl-carrier-protein] reductase [NADH] FabV from Aeromonas salmonicida (strain A449).